The following is a 151-amino-acid chain: Transcription elongation factor Spt5 (151 aa).

Residues 98–128 form the KOW domain; that stretch reads PGQVVEIVAGAFKGMKARVIDVNQSKGQVTV.

It belongs to the archaeal Spt5 family. In terms of assembly, heterodimer composed of Spt4 and Spt5. Interacts with RNA polymerase (RNAP).

Its function is as follows. Stimulates transcription elongation. The sequence is that of Transcription elongation factor Spt5 from Aeropyrum pernix (strain ATCC 700893 / DSM 11879 / JCM 9820 / NBRC 100138 / K1).